The chain runs to 85 residues: Growth factor (85 aa).

A signal peptide spans 1–19 (MVPRDLVATLLCAMCIVQA). In terms of domain architecture, EGF-like spans 33 to 77 (RIKLCNDDYKNYCLNNGTCFTVALNNVSLNPFCACHINYVGSRCQ). 3 disulfide bridges follow: cysteine 37-cysteine 51, cysteine 45-cysteine 65, and cysteine 67-cysteine 76. Residues asparagine 48 and asparagine 58 are each glycosylated (N-linked (GlcNAc...) asparagine; by host).

Its subcellular location is the secreted. Stimulates the growth of some tissues. The polypeptide is Growth factor (MGF) (Oryctolagus cuniculus (Rabbit)).